Reading from the N-terminus, the 435-residue chain is ATP-dependent protease ATPase subunit HslU (435 aa).

ATP-binding positions include Val-18, 60-65 (GVGKTE), Asp-248, Glu-313, and Arg-385.

This sequence belongs to the ClpX chaperone family. HslU subfamily. A double ring-shaped homohexamer of HslV is capped on each side by a ring-shaped HslU homohexamer. The assembly of the HslU/HslV complex is dependent on binding of ATP.

Its subcellular location is the cytoplasm. ATPase subunit of a proteasome-like degradation complex; this subunit has chaperone activity. The binding of ATP and its subsequent hydrolysis by HslU are essential for unfolding of protein substrates subsequently hydrolyzed by HslV. HslU recognizes the N-terminal part of its protein substrates and unfolds these before they are guided to HslV for hydrolysis. The sequence is that of ATP-dependent protease ATPase subunit HslU from Xanthobacter autotrophicus (strain ATCC BAA-1158 / Py2).